Reading from the N-terminus, the 444-residue chain is Probable galactarate/D-glucarate transporter GarP (444 aa).

Residues 1–11 (MILDTVDEKKK) are Cytoplasmic-facing. A helical transmembrane segment spans residues 12–32 (GVHTRYLILLIIFIVTAVNYA). Residues 33-56 (DRATLSIAGTEVAKELQLSAVSMG) are Periplasmic-facing. Residues 57–77 (YIFSAFGWAYLLMQIPGGWLL) traverse the membrane as a helical segment. Residues 78–89 (DKFGSKKVYTYS) lie on the Cytoplasmic side of the membrane. A run of 2 helical transmembrane segments spans residues 90-110 (LFFWSLFTFLQGFVDMFPLAW) and 111-131 (AGISMFFMRFMLGFSEAPSFP). Over 132-157 (ANARIVAAWFPTKERGTASAIFNSAQ) the chain is Cytoplasmic. A run of 2 helical transmembrane segments spans residues 158–178 (YFSLALFSPLLGWLTFAWGWE) and 179–199 (HVFTVMGVIGFVLTALWIKLI). Topologically, residues 200-252 (HNPTDHPRMSAEELKFISENGAVVDMDHKKPGSAAASGPKLHYIKQLLSNRMM) are cytoplasmic. The helical transmembrane segment at 253–273 (LGVFFGQYFINTITWFFLTWF) threads the bilayer. The Periplasmic portion of the chain corresponds to 274-288 (PIYLVQEKGMSILKV). The helical transmembrane segment at 289–309 (GLVASIPALCGFAGGVLGGVF) threads the bilayer. Over 310 to 319 (SDYLIKRGLS) the chain is Cytoplasmic. Residues 320–340 (LTLARKLPIVLGMLLASTIIL) form a helical membrane-spanning segment. The Periplasmic portion of the chain corresponds to 341 to 350 (CNYTNNTTLV). A helical membrane pass occupies residues 351–371 (VMLMALAFFGKGFGALGWPVI). Residues 372-385 (SDTAPKEIVGLCGG) are Cytoplasmic-facing. The chain crosses the membrane as a helical span at residues 386 to 406 (VFNVFGNVASIVTPLVIGYLV). The Periplasmic segment spans residues 407–413 (SELHSFN). A helical membrane pass occupies residues 414–434 (AALVFVGCSALMAMVCYLFVV). Topologically, residues 435-444 (GDIKRMELQK) are cytoplasmic.

It belongs to the major facilitator superfamily. Phthalate permease family.

The protein resides in the cell inner membrane. It carries out the reaction galactarate(in) + H(+)(in) = galactarate(out) + H(+)(out). It catalyses the reaction D-glucarate(in) + H(+)(in) = D-glucarate(out) + H(+)(out). The enzyme catalyses (R)-glycerate(in) + H(+)(in) = (R)-glycerate(out) + H(+)(out). Probably involved in the uptake of galactarate and/or D-glucarate. May also transport D-glycerate. The polypeptide is Probable galactarate/D-glucarate transporter GarP (Escherichia coli (strain K12)).